A 251-amino-acid polypeptide reads, in one-letter code: Thiamine thiazole synthase (251 aa).

Residues S34, 53 to 54, G61, V125, and 151 to 153 each bind NAD(+); these read EK and HVD. Fe cation contacts are provided by D153 and H168. An NAD(+)-binding site is contributed by M216. R226 provides a ligand contact to glycine.

Belongs to the THI4 family. Homooctamer; tetramer of dimers. Fe(2+) is required as a cofactor.

The enzyme catalyses hydrogen sulfide + glycine + NAD(+) = ADP-5-ethyl-4-methylthiazole-2-carboxylate + nicotinamide + 3 H2O + H(+). It functions in the pathway cofactor biosynthesis; thiamine diphosphate biosynthesis. In terms of biological role, involved in the biosynthesis of the thiazole moiety of thiamine. Catalyzes the conversion of NAD and glycine to adenosine diphosphate 5-(2-hydroxyethyl)-4-methylthiazole-2-carboxylate (ADT), an adenylated thiazole intermediate, using free sulfide as a source of sulfur. This Thermococcus kodakarensis (strain ATCC BAA-918 / JCM 12380 / KOD1) (Pyrococcus kodakaraensis (strain KOD1)) protein is Thiamine thiazole synthase.